The following is a 164-amino-acid chain: Ubiquitin-fold modifier-conjugating enzyme 1 (164 aa).

The active-site Glycyl thioester intermediate is the cysteine 116.

It belongs to the ubiquitin-conjugating enzyme family. UFC1 subfamily.

In terms of biological role, E2-like enzyme which forms an intermediate with UFM1 via a thioester linkage. The sequence is that of Ubiquitin-fold modifier-conjugating enzyme 1 from Drosophila willistoni (Fruit fly).